Reading from the N-terminus, the 121-residue chain is Large ribosomal subunit protein uL18 (121 aa).

This sequence belongs to the universal ribosomal protein uL18 family. As to quaternary structure, part of the 50S ribosomal subunit; part of the 5S rRNA/L5/L18/L25 subcomplex. Contacts the 5S and 23S rRNAs.

In terms of biological role, this is one of the proteins that bind and probably mediate the attachment of the 5S RNA into the large ribosomal subunit, where it forms part of the central protuberance. This Desulfotalea psychrophila (strain LSv54 / DSM 12343) protein is Large ribosomal subunit protein uL18.